We begin with the raw amino-acid sequence, 366 residues long: Putative actin-9 (366 aa).

Belongs to the actin family. As to quaternary structure, polymerization of globular actin (G-actin) leads to a structural filament (F-actin) in the form of a two-stranded helix. The binding of profilin to monomeric G-actin cause the sequestration of actin into profilactin complexes, and prevents the polymerization.

The protein localises to the cytoplasm. Its subcellular location is the cytoskeleton. Its function is as follows. Actins are highly conserved proteins that are involved in various types of cell motility and are ubiquitously expressed in all eukaryotic cells. Essential component of cell cytoskeleton; plays an important role in cytoplasmic streaming, cell shape determination, cell division, organelle movement and extension growth. This chain is Putative actin-9 (ACT9), found in Arabidopsis thaliana (Mouse-ear cress).